The following is a 571-amino-acid chain: Septation ring formation regulator EzrA (571 aa).

The Extracellular portion of the chain corresponds to 1 to 3 (MYY). The chain crosses the membrane as a helical span at residues 4–22 (MLIGFIIVVIAVIGAGYIL). Over 23–571 (KRKHYQRINE…ESKVSVDDIE (549 aa)) the chain is Cytoplasmic. Coiled coils occupy residues 248 to 298 (LAQM…DTLE), 326 to 374 (DALA…ASGE), 400 to 437 (KFAE…ERER), and 478 to 529 (RIAE…ENHF).

The protein belongs to the EzrA family.

It localises to the cell membrane. Functionally, negative regulator of FtsZ ring formation; modulates the frequency and position of FtsZ ring formation. Inhibits FtsZ ring formation at polar sites. Interacts either with FtsZ or with one of its binding partners to promote depolymerization. This Listeria monocytogenes serotype 4b (strain CLIP80459) protein is Septation ring formation regulator EzrA.